We begin with the raw amino-acid sequence, 94 residues long: Large ribosomal subunit protein bL31 (94 aa).

Residues 65–94 (YGMADSENDSTDKKKTTNEKKVSDSPSKES) are disordered. Residues 74–94 (STDKKKTTNEKKVSDSPSKES) show a composition bias toward basic and acidic residues.

The protein belongs to the bacterial ribosomal protein bL31 family. Type A subfamily. As to quaternary structure, part of the 50S ribosomal subunit.

Its function is as follows. Binds the 23S rRNA. The chain is Large ribosomal subunit protein bL31 from Prochlorococcus marinus (strain MIT 9211).